The primary structure comprises 266 residues: Luciferase (266 aa).

Residues 22 to 41 (GLAVTCCAVAVASIIAFPYI) form a helical membrane-spanning segment.

This sequence belongs to the fungal luciferase family.

The protein localises to the membrane. The enzyme catalyses 3-hydroxyhispidin + O2 = (E)-caffeoylpyruvate + hnu + CO2. The catalysed reaction is 3-hydroxyhispidin + O2 = 4-[(E)-2-(3,4-dihydroxyphenyl)ethenyl]-1,7-dihydroxy-2,3,5-trioxabicyclo[2.2.2]oct-7-en-6-one. In terms of biological role, luciferase; part of the gene cluster that mediates the fungal bioluminescence cycle. Uses the fungal luciferin 3-hydroxyhispidin as a substrate to produce an endoperoxide as a high-energy intermediate with decomposition that yields oxyluciferin (also known as caffeoylpyruvate) and light emission. The fungal bioluminescence cycle begins with the hispidin synthetase that catalyzes the formation of hispidin which is further hydroxylated by the hispidin-3-hydroxylase, yielding the fungal luciferin 3-hydroxyhispidin. The luciferase then produces an endoperoxide as a high-energy intermediate with decomposition that yields oxyluciferin and light emission. Oxyluciferin can be recycled to caffeic acid by caffeoylpyruvate hydrolase. The sequence is that of Luciferase from Armillaria mellea (Honey mushroom).